Reading from the N-terminus, the 62-residue chain is MSIIFQLVLTALVFFSFVMVVAVPVAYASPQNWDQSKPLLYVGSAIWIGLVLLVAILNFLVV.

Helical transmembrane passes span 8 to 28 (VLTA…VAYA) and 41 to 61 (YVGS…NFLV).

This sequence belongs to the PsbZ family. In terms of assembly, PSII is composed of 1 copy each of membrane proteins PsbA, PsbB, PsbC, PsbD, PsbE, PsbF, PsbH, PsbI, PsbJ, PsbK, PsbL, PsbM, PsbT, PsbX, PsbY, PsbZ, Psb30/Ycf12, peripheral proteins PsbO, CyanoQ (PsbQ), PsbU, PsbV and a large number of cofactors. It forms dimeric complexes.

The protein localises to the cellular thylakoid membrane. Functionally, may control the interaction of photosystem II (PSII) cores with the light-harvesting antenna, regulates electron flow through the 2 photosystem reaction centers. PSII is a light-driven water plastoquinone oxidoreductase, using light energy to abstract electrons from H(2)O, generating a proton gradient subsequently used for ATP formation. This chain is Photosystem II reaction center protein Z, found in Crocosphaera subtropica (strain ATCC 51142 / BH68) (Cyanothece sp. (strain ATCC 51142)).